We begin with the raw amino-acid sequence, 80 residues long: Sulfur carrier protein TusA (80 aa).

Cys17 serves as the catalytic Cysteine persulfide intermediate.

The protein belongs to the sulfur carrier protein TusA family.

The protein resides in the cytoplasm. In terms of biological role, sulfur carrier protein which probably makes part of a sulfur-relay system. The chain is Sulfur carrier protein TusA from Pseudomonas putida (strain GB-1).